We begin with the raw amino-acid sequence, 140 residues long: ATP synthase epsilon chain (140 aa).

It belongs to the ATPase epsilon chain family. In terms of assembly, F-type ATPases have 2 components, CF(1) - the catalytic core - and CF(0) - the membrane proton channel. CF(1) has five subunits: alpha(3), beta(3), gamma(1), delta(1), epsilon(1). CF(0) has three main subunits: a, b and c.

Its subcellular location is the cell inner membrane. Its function is as follows. Produces ATP from ADP in the presence of a proton gradient across the membrane. This Sodalis glossinidius (strain morsitans) protein is ATP synthase epsilon chain.